The primary structure comprises 1822 residues: CDK5 regulatory subunit-associated protein 2 (1822 aa).

The interval 50–93 is CM1 motif; interacts with the gTuRC; the sequence is KVSPTRARNMKDFENQITELKKENFNLKLRIYFLEERIQQEFAG. Positions 57-195 are interaction with NCKAP5L; that stretch reads RNMKDFENQI…TEKALRLSLE (139 aa). Ser-485 and Ser-544 each carry phosphoserine. Residues 1022-1046 form a disordered region; sequence FQDNPGEQEGPETTQSAGRDKDMDS. Residue Thr-1195 is modified to Phosphothreonine. An interaction with PCNT and AKAP9 region spans residues 1201 to 1822; that stretch reads GKMLESLKQQ…GASSPSRPGS (622 aa). Ser-1243 and Ser-1245 each carry phosphoserine. The tract at residues 1350 to 1391 is disordered; sequence YHHLLPESPEPSASHALSDDEMSEKSFLSRDPKPDSDTEKYP. Basic and acidic residues predominate over residues 1372-1389; the sequence is SEKSFLSRDPKPDSDTEK. 3 positions are modified to phosphoserine: Ser-1497, Ser-1592, and Ser-1595. An interaction with CDK5R1 region spans residues 1655–1697; the sequence is HMLGLIEDYDALYKQISWGQTLLAKMDVQTQEALSPTSHKLGP. Positions 1655–1822 are required for centrosomal attachment, Golgi targeting and CALM1 interaction; sequence HMLGLIEDYD…GASSPSRPGS (168 aa). Positions 1688–1822 are interaction with PCNT; that stretch reads LSPTSHKLGP…GASSPSRPGS (135 aa). The tract at residues 1790-1799 is required for centrosomal attachment, Golgi localization and CALM1 interaction; the sequence is VITHQVLRKA. Ser-1822 carries the post-translational modification Phosphoserine.

As to quaternary structure, homodimer. Interacts with CDK5R1 (p35 form). CDK5RAP1, CDK5RAP2 and CDK5RAP3 show competitive binding to CDK5R1. May form a complex with CDK5R1 and CDK5. Interacts with pericentrin/PCNT; the interaction is leading to centrosomal and Golgi localization of CDK5RAP2 and PCNT. Interacts with AKAP9; the interaction targets CDK5RAP2 and AKAP9 to Golgi apparatus. Interacts with TUBG1; the interaction is leading to the centrosomal localization of CDK5RAP2 and TUBG1. Interacts with TUBGCP3. Interacts with CALM1. Interacts with CDC20. Interacts with CEP68; degradation of CEP68 in early mitosis leads to removal of CDK5RAP2 from the centrosome which promotes centriole disengagement and subsequent centriole separation. Interacts with NCKAP5L. Interacts with LGALS3BP; this interaction may connect the pericentrosomal complex to the gamma-tubulin ring complex (gTuRC) to promote microtubule assembly and acetylation. Contrary to human, chimpanzee, bovine and dog orthologous proteins, does not interact with EB1/MAPRE1, possibly due to a divergence at the level of the critical residue 939, which is a proline in MAPRE1-binding orthologs and a leucine in mouse and rat. Interacts with CCDC66. Associates (via CM1 motif) with TUBGCP2 of the gTuRC; the interaction plays a role in gTuRC activation. Post-translationally, phosphorylated in vitro by CDK5. Expressed in testis, thymus, heart and brain.

The protein localises to the cytoplasm. Its subcellular location is the cytoskeleton. It localises to the microtubule organizing center. The protein resides in the centrosome. It is found in the golgi apparatus. Functionally, potential regulator of CDK5 activity via its interaction with CDK5R1. Negative regulator of centriole disengagement (licensing) which maintains centriole engagement and cohesion. Involved in regulation of mitotic spindle orientation. Plays a role in the spindle checkpoint activation by acting as a transcriptional regulator of both BUBR1 and MAD2 promoter. Together with EB1/MAPRE1, may promote microtubule polymerization, bundle formation, growth and dynamics at the plus ends. Regulates centrosomal maturation by recruitment of the gamma-tubulin ring complex (gTuRC) onto centrosomes. Required for the recruitment of AKAP9 to centrosomes. Plays a role in neurogenesis. Contrary to higher mammalian orthologs, including human, chimpanzee, bovine and dog, does not interact with EB1/MAPRE1, therefore its function in the regulation of microtubule dynamics is unclear. This Mus musculus (Mouse) protein is CDK5 regulatory subunit-associated protein 2 (Cdk5rap2).